A 118-amino-acid chain; its full sequence is Late cornified envelope protein 1C (118 aa).

Residues 1 to 10 are compositionally biased toward low complexity; that stretch reads MSCQQSQQQC. Disordered regions lie at residues 1–23 and 87–118; these read MSCQ…CPPK and CHRP…GGCC. The segment covering 11–23 has biased composition (pro residues); the sequence is QPPPKCTPKCPPK. Low complexity predominate over residues 90–103; it reads PQSSGCCSQPSGGS. Residues 104–118 are compositionally biased toward gly residues; the sequence is SCCGGGSGQHSGGCC.

This sequence belongs to the LCE family. Interacts with CYSRT1. In terms of tissue distribution, skin-specific. Expression was readily detected in adult trunk skin, adult arm skin, fetal skin, penal skin, vulva, esophagus and tongue. Not expressed in the cervix, rectum, lung, colon, or placenta.

In terms of biological role, precursors of the cornified envelope of the stratum corneum. This Homo sapiens (Human) protein is Late cornified envelope protein 1C (LCE1C).